The sequence spans 487 residues: MEKSKNIWSLILTEIKKELSEEEFYVWFENLCFLESIGDNIKISTPNLFHKNQIEKRFTKKIKEILIKNGYNNIVIVFTNQPPKTHSNKQETKNPALNETFSKFDKLKEKTTSKEAIQNIQDRIKMYIKKEEEEEPTNFKNPFLKKRYTFENFIIGPNNKLAYNASLSISKNPGKKYNPCLIYGGVGLGKTHLLQSIGNKTEELHHNLKILYVTAENFLNEFVESIKTHETKKFKKKYRYLDMLLIDDIHDLQKKEGIQEELFHTFNALYEDNKQLVFTCDRSPSELTNFTDRLKSRFTRGLNVDISKPNFELRAAIVEKKAEEDGINVPKNILNLVAQKVTTNVRDLEAAVTKLKAYIDLDNIEIDIEIVEKIIKEIIIYEKETTNEPNNKINIENIKKILLRELKITHKDIEGHSKKPEITKARHIYAYLLRNFTELSTVEIGKIIGGKTHSTVLYSINKIDRDRNNDKEINNLITELMNKIKKN.

The domain I, interacts with DnaA modulators stretch occupies residues 1–79; the sequence is MEKSKNIWSL…GYNNIVIVFT (79 aa). The tract at residues 79–142 is domain II; it reads TNQPPKTHSN…EEEPTNFKNP (64 aa). Positions 143-359 are domain III, AAA+ region; the sequence is FLKKRYTFEN…AAVTKLKAYI (217 aa). Positions 187, 189, 190, and 191 each coordinate ATP. Residues 360-487 are domain IV, binds dsDNA; it reads DLDNIEIDIE…TELMNKIKKN (128 aa).

This sequence belongs to the DnaA family. Oligomerizes as a right-handed, spiral filament on DNA at oriC.

It is found in the cytoplasm. Plays an essential role in the initiation and regulation of chromosomal replication. ATP-DnaA binds to the origin of replication (oriC) to initiate formation of the DNA replication initiation complex once per cell cycle. Binds the DnaA box (a 9 base pair repeat at the origin) and separates the double-stranded (ds)DNA. Forms a right-handed helical filament on oriC DNA; dsDNA binds to the exterior of the filament while single-stranded (ss)DNA is stabiized in the filament's interior. The ATP-DnaA-oriC complex binds and stabilizes one strand of the AT-rich DNA unwinding element (DUE), permitting loading of DNA polymerase. After initiation quickly degrades to an ADP-DnaA complex that is not apt for DNA replication. Binds acidic phospholipids. In Borreliella burgdorferi (strain ZS7) (Borrelia burgdorferi), this protein is Chromosomal replication initiator protein DnaA.